The primary structure comprises 527 residues: Light-independent protochlorophyllide reductase subunit B (527 aa).

Residue aspartate 36 coordinates [4Fe-4S] cluster. Residue aspartate 290 is the Proton donor of the active site. 425–426 (GL) lines the substrate pocket.

The protein belongs to the ChlB/BchB/BchZ family. As to quaternary structure, protochlorophyllide reductase is composed of three subunits; ChlL, ChlN and ChlB. Forms a heterotetramer of two ChlB and two ChlN subunits. [4Fe-4S] cluster serves as cofactor.

The catalysed reaction is chlorophyllide a + oxidized 2[4Fe-4S]-[ferredoxin] + 2 ADP + 2 phosphate = protochlorophyllide a + reduced 2[4Fe-4S]-[ferredoxin] + 2 ATP + 2 H2O. It functions in the pathway porphyrin-containing compound metabolism; chlorophyll biosynthesis (light-independent). Its function is as follows. Component of the dark-operative protochlorophyllide reductase (DPOR) that uses Mg-ATP and reduced ferredoxin to reduce ring D of protochlorophyllide (Pchlide) to form chlorophyllide a (Chlide). This reaction is light-independent. The NB-protein (ChlN-ChlB) is the catalytic component of the complex. This Synechococcus sp. (strain RCC307) protein is Light-independent protochlorophyllide reductase subunit B.